Reading from the N-terminus, the 177-residue chain is ATP synthase subunit delta (177 aa).

Belongs to the ATPase delta chain family. F-type ATPases have 2 components, F(1) - the catalytic core - and F(0) - the membrane proton channel. F(1) has five subunits: alpha(3), beta(3), gamma(1), delta(1), epsilon(1). F(0) has three main subunits: a(1), b(2) and c(10-14). The alpha and beta chains form an alternating ring which encloses part of the gamma chain. F(1) is attached to F(0) by a central stalk formed by the gamma and epsilon chains, while a peripheral stalk is formed by the delta and b chains.

It is found in the cell inner membrane. Functionally, f(1)F(0) ATP synthase produces ATP from ADP in the presence of a proton or sodium gradient. F-type ATPases consist of two structural domains, F(1) containing the extramembraneous catalytic core and F(0) containing the membrane proton channel, linked together by a central stalk and a peripheral stalk. During catalysis, ATP synthesis in the catalytic domain of F(1) is coupled via a rotary mechanism of the central stalk subunits to proton translocation. Its function is as follows. This protein is part of the stalk that links CF(0) to CF(1). It either transmits conformational changes from CF(0) to CF(1) or is implicated in proton conduction. The sequence is that of ATP synthase subunit delta from Vibrio alginolyticus.